A 1955-amino-acid chain; its full sequence is Callose synthase 3 (1955 aa).

The Cytoplasmic portion of the chain corresponds to 1-488 (MSATRGGPDQ…FWHVFRSFDR (488 aa)). Residues 489–509 (MWSFYILCLQAMIIMAWDGGQ) traverse the membrane as a helical segment. Residues 510–521 (PSSVFGADVFKK) are Extracellular-facing. A helical transmembrane segment spans residues 522 to 542 (VLSVFITAAIMKLGQAVLDVI). At 543–558 (LNFKAHQSMTLHVKLR) the chain is on the cytoplasmic side. A helical transmembrane segment spans residues 559–579 (YILKVFSAAAWVIILPVTYAY). The Extracellular portion of the chain corresponds to 580 to 604 (SWKDPPAFARTIKSWFGSAMHSPSL). A helical transmembrane segment spans residues 605-625 (FIIAVVSYLSPNMLAGVMFLF). Residues 626-660 (PLLRRFLERSNYRIVMLMMWWSQPRLYVGRGMHES) lie on the Cytoplasmic side of the membrane. The chain crosses the membrane as a helical span at residues 661 to 681 (AFSLFKYTMFWVLLIATKLAF). The Extracellular segment spans residues 682-717 (SYYIEIRPLVAPTQAIMKARVTNFQWHEFFPRAKNN). Residues 718-738 (IGVVIALWAPIILVYFMDSQI) form a helical membrane-spanning segment. Residues 739–1517 (WYAIFSTLFG…FDFFRMMSCY (779 aa)) are Cytoplasmic-facing. A helical transmembrane segment spans residues 1518-1538 (FTTVGFYFSTLITVLTVYIFL). Residues 1539–1566 (YGRLYLVLSGLEQGLSTQKGIRDNTPLQ) lie on the Extracellular side of the membrane. A helical transmembrane segment spans residues 1567–1587 (IALASQSFVQIGFLMALPMLM). The Cytoplasmic portion of the chain corresponds to 1588-1597 (EIGLERGFRT). A helical transmembrane segment spans residues 1598-1618 (ALSEFVLMQLQLAPVFFTFSL). Topologically, residues 1619 to 1661 (GTKTHYYGRTLLHGGAKYRSTGRGFVVFHAKFADNYRLYSRSH) are extracellular. Residues 1662–1682 (FVKGLEMMLLLVVYQIFGSAY) form a helical membrane-spanning segment. The Cytoplasmic segment spans residues 1683–1688 (RGVLAY). The helical transmembrane segment at 1689-1709 (LLITISMWFMVGTWLFAPFLF) threads the bilayer. Over 1710–1761 (NPSGFEWQKIVDDWTDWNKWINNIGGIGVPAEKSWESWWEEEQEHLRYSGKR) the chain is Extracellular. The chain crosses the membrane as a helical span at residues 1762 to 1782 (GIVVEILLALRFFIYQYGLVY). The Cytoplasmic portion of the chain corresponds to 1783-1792 (HLTITEKTKN). A helical transmembrane segment spans residues 1793 to 1813 (FLVYGVSWLVIFLILFVMKTV). The Extracellular segment spans residues 1814-1833 (SVGRRRFSASFQLMFRLIKG). The helical transmembrane segment at 1834-1854 (LIFMTFIAIIVILITLAHMTI) threads the bilayer. At 1855 to 1856 (QD) the chain is on the cytoplasmic side. Residues 1857-1877 (IIVCILAFMPTGWGMLLIAQA) form a helical membrane-spanning segment. Residues 1878–1899 (CKPVVHRAGFWGSVRTLARGYE) are Extracellular-facing. A helical membrane pass occupies residues 1900 to 1920 (IVMGLLLFTPVAFLAWFPFVS). The Cytoplasmic portion of the chain corresponds to 1921 to 1955 (EFQTRMLFNQAFSRGLQISRILGGHRKDRSSRNKE).

This sequence belongs to the glycosyltransferase 48 family.

The protein resides in the cell membrane. The enzyme catalyses [(1-&gt;3)-beta-D-glucosyl](n) + UDP-alpha-D-glucose = [(1-&gt;3)-beta-D-glucosyl](n+1) + UDP + H(+). Involved in callose synthesis at the forming cell plate during cytokinesis. During plant growth and development, callose is found as a transitory component of the cell plate in dividing cells, is a major component of pollen mother cell walls and pollen tubes, and is found as a structural component of plasmodesmatal canals. This is Callose synthase 3 (CALS3) from Arabidopsis thaliana (Mouse-ear cress).